We begin with the raw amino-acid sequence, 644 residues long: 1-deoxy-D-xylulose-5-phosphate synthase (644 aa).

Thiamine diphosphate is bound by residues H78 and 120–122 (GHA). D149 serves as a coordination point for Mg(2+). Residues 150 to 151 (AA), N178, and E373 each bind thiamine diphosphate. N178 is a Mg(2+) binding site.

This sequence belongs to the transketolase family. DXPS subfamily. As to quaternary structure, homodimer. Mg(2+) is required as a cofactor. Requires thiamine diphosphate as cofactor.

The enzyme catalyses D-glyceraldehyde 3-phosphate + pyruvate + H(+) = 1-deoxy-D-xylulose 5-phosphate + CO2. It functions in the pathway metabolic intermediate biosynthesis; 1-deoxy-D-xylulose 5-phosphate biosynthesis; 1-deoxy-D-xylulose 5-phosphate from D-glyceraldehyde 3-phosphate and pyruvate: step 1/1. Functionally, catalyzes the acyloin condensation reaction between C atoms 2 and 3 of pyruvate and glyceraldehyde 3-phosphate to yield 1-deoxy-D-xylulose-5-phosphate (DXP). The sequence is that of 1-deoxy-D-xylulose-5-phosphate synthase from Chlamydia caviae (strain ATCC VR-813 / DSM 19441 / 03DC25 / GPIC) (Chlamydophila caviae).